The primary structure comprises 536 residues: GMP synthase [glutamine-hydrolyzing] (536 aa).

One can recognise a Glutamine amidotransferase type-1 domain in the interval 4–206; that stretch reads KILILDFGSQ…VLDICGARAD (203 aa). Cys85 acts as the Nucleophile in catalysis. Catalysis depends on residues His180 and Glu182. The region spanning 207–404 is the GMPS ATP-PPase domain; it reads WIMGDYISEA…LGLPYHMVYR (198 aa). Residue 234–240 participates in ATP binding; it reads SGGVDSS.

As to quaternary structure, homodimer.

It catalyses the reaction XMP + L-glutamine + ATP + H2O = GMP + L-glutamate + AMP + diphosphate + 2 H(+). It functions in the pathway purine metabolism; GMP biosynthesis; GMP from XMP (L-Gln route): step 1/1. Functionally, catalyzes the synthesis of GMP from XMP. This is GMP synthase [glutamine-hydrolyzing] from Albidiferax ferrireducens (strain ATCC BAA-621 / DSM 15236 / T118) (Rhodoferax ferrireducens).